We begin with the raw amino-acid sequence, 128 residues long: Fluoride-specific ion channel FluC (128 aa).

4 helical membrane-spanning segments follow: residues Leu-4 to Gln-24, Thr-37 to Leu-57, Val-72 to Ile-92, and Phe-101 to Ile-121. Positions 76 and 79 each coordinate Na(+).

This sequence belongs to the fluoride channel Fluc/FEX (TC 1.A.43) family.

It localises to the cell inner membrane. It carries out the reaction fluoride(in) = fluoride(out). Na(+) is not transported, but it plays an essential structural role and its presence is essential for fluoride channel function. In terms of biological role, fluoride-specific ion channel. Important for reducing fluoride concentration in the cell, thus reducing its toxicity. This chain is Fluoride-specific ion channel FluC, found in Caulobacter sp. (strain K31).